The following is a 217-amino-acid chain: Eukaryotic translation initiation factor 4E (217 aa).

The segment at M1–N30 is disordered. A2 bears the N-acetylalanine mark. T22 carries the phosphothreonine modification. The interval H37–Q40 is EIF4EBP1/2/3 binding. W56 to Q57 serves as a coordination point for mRNA. The interval W73–N77 is EIF4EBP1/2/3 binding. Position 102 to 103 (W102 to E103) interacts with mRNA. The interval E132–G139 is EIF4EBP1/2/3 binding. Residues R157 to K162 and T205 to S207 each bind mRNA. A Phosphoserine; by PKC and MKNK2 modification is found at S209.

It belongs to the eukaryotic initiation factor 4E family. In terms of assembly, eIF4F is a multi-subunit complex, the composition of which varies with external and internal environmental conditions. It is composed of at least EIF4A, EIF4E and EIF4G1/EIF4G3. EIF4E is also known to interact with other partners. Interacts with EIF4ENIF1/4E-T; promotes recruitment to P-bodies and import into the nucleus. Hypophosphorylated EIF4EBP1, EIF4EBP2 and EIF4EBP3 compete with EIF4G1/EIF4G3 to interact with EIF4E; insulin stimulated MAP-kinase (MAPK1 and MAPK3) phosphorylation of EIF4EBP1 causes dissociation of the complex allowing EIF4G1/EIF4G3 to bind and consequent initiation of translation. Interacts mutually exclusive with EIF4A1 or EIF4A2. Interacts with NGDN and PIWIL2. Component of the CYFIP1-EIF4E-FMR1 complex composed of CYFIP, EIF4E and FMR1. Interacts directly with CYFIP1. Interacts with CLOCK. Binds to MKNK2 in nucleus. Interacts with LIMD1, WTIP and AJUBA. Interacts with APOBEC3G in an RNA-dependent manner. Interacts with LARP1. Interacts with METTL3. Interacts with RBM24; this interaction prevents EIF4E from binding to p53/TP53 mRNA and inhibits the assembly of translation initiation complex. Interacts with DDX3X; interaction is direct and in an RNA-independent manner; this interaction enhances EIF4E cap-binding ability and is required for the repression of cap-dependent translation and the increase of IRES-mediated translation. DDX3X competes with EIF4G1 for interaction with EIF4E. Interacts with EIF4G1; which in a mutual exclusive interaction associates either with EIF1 or with EIF4E on a common binding site. Interacts with BTG4 and CNOT7. Interacts with LRPPRC (via N-terminus); the interaction promotes association of EIF4E with 4ESE-containing mRNAs. Interacts with mRNA cleavage enzyme CPSF3 and its cofactor CPSF1. Interacts (via RING-type zinc finger) with PML; the interaction results in conformational changes of both interacting proteins and reduces EIF4E affinity for the 5' m7G cap of mRNA, thus reducing EIF4E-mediated mRNA nuclear export. Interacts with homeobox protein HHEX/PRH; the interaction inhibits EIF4E-mediated mRNA nuclear export. Interacts with homeobox protein HOXA9; the interaction positively regulates EIF4E-mediated mRNA nuclear export. Interacts with homeobox protein EMX2. As to quaternary structure, (Microbial infection) Interacts with Lassa virus Z protein. (Microbial infection) Interacts with Lymphocytic choriomeningitis virus (LCMV) Z protein (via RING-type zinc finger); the interaction results in conformational changes of both interacting proteins and reduces EIF4E affinity for the m7G mRNA cap structure. In terms of assembly, (Microbial infection) Interacts (via cap-binding region) with potato virus Y VPg; this interaction mediates the translation of the VPg-viral RNA conjugates and interferes with the cellular EIF4E-dependent mRNA export and translation. Post-translationally, phosphorylation increases the ability of the protein to bind to mRNA caps and to form the eIF4F complex. Phosphorylation also enhances its mRNA transport function. Phosphorylation at Ser-209 is not essential for protein synthesis.

Its subcellular location is the cytoplasm. The protein resides in the P-body. It localises to the stress granule. It is found in the nucleus. The protein localises to the nucleus speckle. Its subcellular location is the nuclear body. Its function is as follows. Acts in the cytoplasm to initiate and regulate protein synthesis and is required in the nucleus for export of a subset of mRNAs from the nucleus to the cytoplasm which promotes processes such as RNA capping, processing and splicing. Component of the protein complex eIF4F, which is involved in the recognition of the mRNA cap, ATP-dependent unwinding of 5'-terminal secondary structure and recruitment of mRNA to the ribosome. This protein recognizes and binds the 7-methylguanosine (m7G)-containing mRNA cap during an early step in the initiation of protein synthesis and facilitates ribosome binding by inducing the unwinding of the mRNAs secondary structures. Together with EIF4G1, antagonizes the scanning promoted by EIF1-EIF4G1 and is required for TISU translation, a process where the TISU element recognition makes scanning unnecessary. In addition to its role in translation initiation, also acts as a regulator of translation and stability in the cytoplasm. Component of the CYFIP1-EIF4E-FMR1 complex which binds to the mRNA cap and mediates translational repression: in the complex, EIF4E mediates the binding to the mRNA cap. Component of a multiprotein complex that sequesters and represses translation of proneurogenic factors during neurogenesis. In P-bodies, component of a complex that mediates the storage of translationally inactive mRNAs in the cytoplasm and prevents their degradation. May play an important role in spermatogenesis through translational regulation of stage-specific mRNAs during germ cell development. As well as its roles in translation, also involved in mRNA nucleocytoplasmic transport. Its role in mRNA export from the nucleus to the cytoplasm relies on its ability to bind the m7G cap of RNAs and on the presence of the 50-nucleotide EIF4E sensitivity element (4ESE) in the 3'UTR of sensitive transcripts. Interaction with the 4ESE is mediated by LRPPRC which binds simultaneously to both EIF4E and the 4ESE, thereby acting as a platform for assembly for the RNA export complex. EIF4E-dependent mRNA export is independent of ongoing protein or RNA synthesis and is also NFX1-independent but is XPO1-dependent with LRPPRC interacting with XPO1 to form an EIF4E-dependent mRNA export complex. Alters the composition of the cytoplasmic face of the nuclear pore to promote RNA export by reducing RANBP2 expression, relocalizing nucleoporin NUP214 and increasing expression of RANBP1 and RNA export factors DDX19 and GLE1. Promotes the nuclear export of cyclin CCND1 mRNA. Promotes the nuclear export of NOS2/iNOS mRNA. Promotes the nuclear export of MDM2 mRNA. Promotes the export of additional mRNAs, including others involved in the cell cycle. In the nucleus, binds to capped splice factor-encoding mRNAs and stimulates their nuclear export to enhance splice factor production by increasing their cytoplasmic availability to the translation machinery. May also regulate splicing through interaction with the spliceosome in an RNA and m7G cap-dependent manner. Also binds to some pre-mRNAs and may play a role in their recruitment to the spliceosome. Promotes steady-state capping of a subset of coding and non-coding RNAs by mediating nuclear export of capping machinery mRNAs including RNMT, RNGTT and RAMAC to enhance their translation. Stimulates mRNA 3'-end processing by promoting the expression of several core cleavage complex factors required for mRNA cleavage and polyadenylation, and may also have a direct effect through its interaction with the CPSF3 cleavage enzyme. Rescues cells from apoptosis by promoting activation of serine/threonine-protein kinase AKT1 through mRNA export of NBS1 which potentiates AKT1 phosphorylation and also through mRNA export of AKT1 effectors, allowing for increased production of these proteins. The sequence is that of Eukaryotic translation initiation factor 4E from Homo sapiens (Human).